The sequence spans 463 residues: Sporulation-specific protein 22 (463 aa).

The N-terminal stretch at 1–25 (MNRITRKSCLFAIIFASLFVTHALG) is a signal peptide. LRR repeat units follow at residues 127 to 147 (SPELIRIQAGNLNKIEGLFQL), 185 to 206 (IEIIKDIVISDTSLANIENFNK), 207 to 233 (VQEIDTFNINNNRFLETIHSNVKTIRG), 251 to 275 (LREVENITIRDTSLVYLPQLTKVKS), and 302 to 325 (INNVNLIKVNLENLTDIQGGLMIA). N-linked (GlcNAc...) asparagine glycans are attached at residues Asn256, Asn314, and Asn327. A lipid anchor (GPI-anchor amidated asparagine) is attached at Asn440. A propeptide spans 441 to 463 (SANPSMQLDPLLFGTCLVAMLLF) (removed in mature form).

Belongs to the SPS2 family.

It is found in the cell membrane. In terms of biological role, redundant with SPS2 for the organization of the beta-glucan layer of the spore wall. This chain is Sporulation-specific protein 22 (SPS22), found in Saccharomyces cerevisiae (strain ATCC 204508 / S288c) (Baker's yeast).